Reading from the N-terminus, the 261-residue chain is 1-(5-phosphoribosyl)-5-[(5-phosphoribosylamino)methylideneamino] imidazole-4-carboxamide isomerase (261 aa).

The protein belongs to the HisA/HisF family.

It localises to the cytoplasm. It catalyses the reaction 1-(5-phospho-beta-D-ribosyl)-5-[(5-phospho-beta-D-ribosylamino)methylideneamino]imidazole-4-carboxamide = 5-[(5-phospho-1-deoxy-D-ribulos-1-ylimino)methylamino]-1-(5-phospho-beta-D-ribosyl)imidazole-4-carboxamide. It participates in amino-acid biosynthesis; L-histidine biosynthesis; L-histidine from 5-phospho-alpha-D-ribose 1-diphosphate: step 4/9. In terms of biological role, catalyzes the isomerization of the aminoaldose moiety of ProFAR to the aminoketose of PRFAR. The sequence is that of 1-(5-phosphoribosyl)-5-[(5-phosphoribosylamino)methylideneamino] imidazole-4-carboxamide isomerase from Saccharomyces cerevisiae (strain ATCC 204508 / S288c) (Baker's yeast).